The primary structure comprises 175 residues: Myosin regulatory light chain 2, atrial isoform (175 aa).

Position 2 is an N-acetylalanine (alanine 2). Phosphoserine occurs at positions 22 and 23. 3 EF-hand domains span residues 32 to 67 (AQIQEFKEAFSCIDQNRDGIICKSDLRETYSQLGKV), 102 to 137 (DPEEAILSAFRLFDPSGKGVVNKDQFKQLLLTQADK), and 138 to 173 (FSPAEVEQMFALTPMDLAGNIDYKSLCYIITHGDEK). 4 residues coordinate Ca(2+): aspartate 45, asparagine 47, aspartate 49, and aspartate 56.

In terms of assembly, myosin is a hexamer of 2 heavy chains and 4 light chains.

The chain is Myosin regulatory light chain 2, atrial isoform (MYL7) from Sus scrofa (Pig).